The primary structure comprises 428 residues: Dihydroorotase (428 aa).

Positions 61 and 63 each coordinate Zn(2+). Substrate-binding positions include 63–65 (HLR) and asparagine 95. 3 residues coordinate Zn(2+): aspartate 153, histidine 180, and histidine 233. Asparagine 279 provides a ligand contact to substrate. Position 306 (aspartate 306) interacts with Zn(2+). Residue aspartate 306 is part of the active site. Substrate contacts are provided by residues histidine 310 and 324–325 (FG).

The protein belongs to the metallo-dependent hydrolases superfamily. DHOase family. Class I DHOase subfamily. Zn(2+) is required as a cofactor.

It catalyses the reaction (S)-dihydroorotate + H2O = N-carbamoyl-L-aspartate + H(+). Its pathway is pyrimidine metabolism; UMP biosynthesis via de novo pathway; (S)-dihydroorotate from bicarbonate: step 3/3. Catalyzes the reversible cyclization of carbamoyl aspartate to dihydroorotate. This is Dihydroorotase from Geobacillus thermodenitrificans (strain NG80-2).